The chain runs to 332 residues: Aquaporin-7-1 (332 aa).

Over 1–66 the chain is Cytoplasmic; that stretch reads MSGQHQITEQ…RHAIRMPMAE (66 aa). Residues 67–87 form a helical membrane-spanning segment; sequence FFGVALLIIFGAGSACQVVLS. Residues 88 to 100 are Extracellular-facing; that stretch reads TNPNVASSDRGSF. Residues 101–121 traverse the membrane as a helical segment; that stretch reads LSINLGWAIGIAMGAWVSGGI. Residues 122-144 lie on the Cytoplasmic side of the membrane; sequence SGGHINPAITIAMATYRGFPWRR. An NPA 1 motif is present at residues 127 to 129; that stretch reads NPA. Residues 145 to 165 traverse the membrane as a helical segment; that stretch reads VPSYIFAQVLGGVVGAALVYA. Residues 166 to 199 lie on the Extracellular side of the membrane; it reads NYIHAIDIFEGGRHVRTQATASLFATYALPYMTQ. Residues 200-220 traverse the membrane as a helical segment; sequence VSCFFSEFLATAVLSMMVLAL. At 221–230 the chain is on the cytoplasmic side; sequence TDNRNGAPTN. Residues 231–251 traverse the membrane as a helical segment; sequence GLLPFALFVLFIGLGASLGME. Residues 252-283 are Extracellular-facing; sequence TAYALNPARDFGPRLFLAMSGYGKALFNYRSQ. The NPA 2 signature appears at 257–259; that stretch reads NPA. A helical membrane pass occupies residues 284-304; sequence YWLWAPIIAPVLGAQAGGLLY. Topologically, residues 305–332 are cytoplasmic; that stretch reads DTFLYDGDNSPIKWRRASSQECQLAEVV.

The protein belongs to the MIP/aquaporin (TC 1.A.8) family.

It is found in the membrane. The catalysed reaction is H2O(in) = H2O(out). Its function is as follows. Water channel required to facilitate the transport of water across membranes. Does not mediate the transport carbon dioxide across the membrane. The protein is Aquaporin-7-1 of Laccaria bicolor (Bicoloured deceiver).